The chain runs to 253 residues: Octanoyltransferase (253 aa).

A BPL/LPL catalytic domain is found at 47 to 236 (PETPDQVWLV…ALCEVLAARE (190 aa)). Substrate is bound by residues 87–94 (RGGQITYH), 159–161 (ALG), and 172–174 (GVS). Cys-190 serves as the catalytic Acyl-thioester intermediate.

This sequence belongs to the LipB family.

It is found in the cytoplasm. The enzyme catalyses octanoyl-[ACP] + L-lysyl-[protein] = N(6)-octanoyl-L-lysyl-[protein] + holo-[ACP] + H(+). It participates in protein modification; protein lipoylation via endogenous pathway; protein N(6)-(lipoyl)lysine from octanoyl-[acyl-carrier-protein]: step 1/2. Catalyzes the transfer of endogenously produced octanoic acid from octanoyl-acyl-carrier-protein onto the lipoyl domains of lipoate-dependent enzymes. Lipoyl-ACP can also act as a substrate although octanoyl-ACP is likely to be the physiological substrate. The polypeptide is Octanoyltransferase (Cupriavidus pinatubonensis (strain JMP 134 / LMG 1197) (Cupriavidus necator (strain JMP 134))).